A 1273-amino-acid chain; its full sequence is Kinesin-like protein KIN-14A (1273 aa).

The segment at Met-1 to Leu-52 is disordered. Residues Ala-59–Tyr-89 adopt a coiled-coil conformation. In terms of domain architecture, Kinesin motor spans Asn-142–Thr-456. Gly-223–Thr-230 serves as a coordination point for ATP. Coiled-coil stretches lie at residues Ile-466 to Leu-511, Gln-559 to Ser-595, and Thr-627 to Glu-657. 2 disordered regions span residues Lys-827–Val-847 and Gln-1136–Ser-1157. Residues Thr-830–Pro-846 show a composition bias toward low complexity.

It belongs to the TRAFAC class myosin-kinesin ATPase superfamily. Kinesin family. KIN-14 subfamily. As to quaternary structure, homodimer and heterodimer with KCA2. Interacts with CDKA-1. Interacts with AL1, a geminivirus (TGMV) protein essential for viral replication. Interacts with LUE1/KSS. Post-translationally, part of the phosphorylation is not CDK-dependent. As to expression, widely expressed.

The protein resides in the nucleus. It is found in the cytoplasm. Its subcellular location is the cytoskeleton. It localises to the spindle. The protein localises to the chromosome. The protein resides in the cell membrane. It is found in the phragmoplast. In terms of biological role, kinesin-like protein required for chloroplast movements and anchor to the plasma membrane. Mediates chloroplast movement via chloroplast actin (cp-actin) filaments. Required for the chloroplast avoidance response under high intensity blue light. Mediates redundantly with CHUP1 the nuclear avoidance response under high intensity blue light. May act as a mitotic kinesin. Probably involved in division plane determination. The polypeptide is Kinesin-like protein KIN-14A (Arabidopsis thaliana (Mouse-ear cress)).